We begin with the raw amino-acid sequence, 157 residues long: ATP synthase subunit b (157 aa).

A helical transmembrane segment spans residues 7–29; sequence LISQAIAFSLFILFTARFVWPYL.

This sequence belongs to the ATPase B chain family. In terms of assembly, F-type ATPases have 2 components, F(1) - the catalytic core - and F(0) - the membrane proton channel. F(1) has five subunits: alpha(3), beta(3), gamma(1), delta(1), epsilon(1). F(0) has three main subunits: a(1), b(2) and c(10-14). The alpha and beta chains form an alternating ring which encloses part of the gamma chain. F(1) is attached to F(0) by a central stalk formed by the gamma and epsilon chains, while a peripheral stalk is formed by the delta and b chains.

It is found in the cell inner membrane. In terms of biological role, f(1)F(0) ATP synthase produces ATP from ADP in the presence of a proton or sodium gradient. F-type ATPases consist of two structural domains, F(1) containing the extramembraneous catalytic core and F(0) containing the membrane proton channel, linked together by a central stalk and a peripheral stalk. During catalysis, ATP synthesis in the catalytic domain of F(1) is coupled via a rotary mechanism of the central stalk subunits to proton translocation. Functionally, component of the F(0) channel, it forms part of the peripheral stalk, linking F(1) to F(0). This Nitrosomonas europaea (strain ATCC 19718 / CIP 103999 / KCTC 2705 / NBRC 14298) protein is ATP synthase subunit b.